Here is a 113-residue protein sequence, read N- to C-terminus: Cytochrome c (113 aa).

A1 bears the N-acetylalanine mark. The heme c site is built by C22, C25, and H26. Position 80 is an N6,N6,N6-trimethyllysine (K80). M88 contacts heme c. K94 is subject to N6,N6,N6-trimethyllysine.

Belongs to the cytochrome c family. Binds 1 heme c group covalently per subunit.

The protein resides in the mitochondrion intermembrane space. Functionally, electron carrier protein. The oxidized form of the cytochrome c heme group can accept an electron from the heme group of the cytochrome c1 subunit of cytochrome reductase. Cytochrome c then transfers this electron to the cytochrome oxidase complex, the final protein carrier in the mitochondrial electron-transport chain. This is Cytochrome c from Ginkgo biloba (Ginkgo).